Here is a 312-residue protein sequence, read N- to C-terminus: Ribose-phosphate pyrophosphokinase (312 aa).

Residues 38–40 (DGE) and 97–98 (RQ) contribute to the ATP site. Mg(2+) is bound by residues His-131 and Asp-170. Residue Lys-193 is part of the active site. Residues Arg-195, Asp-219, and 223–227 (DTAGT) each bind D-ribose 5-phosphate.

It belongs to the ribose-phosphate pyrophosphokinase family. Class I subfamily. Homohexamer. Mg(2+) is required as a cofactor.

The protein localises to the cytoplasm. It catalyses the reaction D-ribose 5-phosphate + ATP = 5-phospho-alpha-D-ribose 1-diphosphate + AMP + H(+). It participates in metabolic intermediate biosynthesis; 5-phospho-alpha-D-ribose 1-diphosphate biosynthesis; 5-phospho-alpha-D-ribose 1-diphosphate from D-ribose 5-phosphate (route I): step 1/1. Involved in the biosynthesis of the central metabolite phospho-alpha-D-ribosyl-1-pyrophosphate (PRPP) via the transfer of pyrophosphoryl group from ATP to 1-hydroxyl of ribose-5-phosphate (Rib-5-P). This Leptospira interrogans serogroup Icterohaemorrhagiae serovar copenhageni (strain Fiocruz L1-130) protein is Ribose-phosphate pyrophosphokinase.